We begin with the raw amino-acid sequence, 476 residues long: tRNA(Ile)-lysidine synthase (476 aa).

30–35 (SGGPDS) is an ATP binding site.

The protein belongs to the tRNA(Ile)-lysidine synthase family.

Its subcellular location is the cytoplasm. The enzyme catalyses cytidine(34) in tRNA(Ile2) + L-lysine + ATP = lysidine(34) in tRNA(Ile2) + AMP + diphosphate + H(+). In terms of biological role, ligates lysine onto the cytidine present at position 34 of the AUA codon-specific tRNA(Ile) that contains the anticodon CAU, in an ATP-dependent manner. Cytidine is converted to lysidine, thus changing the amino acid specificity of the tRNA from methionine to isoleucine. This chain is tRNA(Ile)-lysidine synthase, found in Bacillus cereus (strain ATCC 14579 / DSM 31 / CCUG 7414 / JCM 2152 / NBRC 15305 / NCIMB 9373 / NCTC 2599 / NRRL B-3711).